Reading from the N-terminus, the 501-residue chain is Postreplication repair E3 ubiquitin-protein ligase rad18 (501 aa).

An RING-type zinc finger spans residues 34-72 (CHVCKDFYDSPMLTSCNHTFCSLCIRRCLSVDSKCPLCR). Residues 111-154 (QAILPDQAGPSSPSKRKATEMEGPKEEDPESKRPRRSTRSTRAR) are disordered. Residues 127–142 (KATEMEGPKEEDPESK) are compositionally biased toward basic and acidic residues. Over residues 143-152 (RPRRSTRSTR) the composition is skewed to basic residues. The UBZ4-type zinc finger occupies 186–214 (LVACPICLTRMKEQQVDRHLDTSCPGSPQ). Zn(2+) is bound by residues Cys-189, Cys-192, His-204, and Cys-209. Positions 203–250 (RHLDTSCPGSPQAASKRRPIPAQTPQPSTFPSFNTRLTSQTNQKPPER) are disordered. Residues 225-246 (QTPQPSTFPSFNTRLTSQTNQK) are compositionally biased toward polar residues. The 35-residue stretch at 256–290 (YSMLRDTALRKKLSELGLSTHGSRQLLEKRHKEWI) folds into the SAP domain. The interval 377–501 (IKRQTLDGNG…GMKKPNPETC (125 aa)) is disordered.

Belongs to the RAD18 family. As to quaternary structure, interacts with E2 mus-8/ubc2, forming a complex with ubiquitin ligase activity.

Its subcellular location is the nucleus. It catalyses the reaction S-ubiquitinyl-[E2 ubiquitin-conjugating enzyme]-L-cysteine + [acceptor protein]-L-lysine = [E2 ubiquitin-conjugating enzyme]-L-cysteine + N(6)-ubiquitinyl-[acceptor protein]-L-lysine.. The protein operates within protein modification; protein ubiquitination. Its function is as follows. E3 RING-finger protein, member of the UBC2/RAD6 epistasis group. Associates to the E2 ubiquitin conjugating enzyme mus-8/ubc2 to form the mus-8/ubc2-uvs-2/rad18 ubiquitin ligase complex involved in postreplicative repair (PRR) of damaged DNA. The protein is Postreplication repair E3 ubiquitin-protein ligase rad18 (uvs-2) of Neurospora crassa (strain ATCC 24698 / 74-OR23-1A / CBS 708.71 / DSM 1257 / FGSC 987).